The following is a 223-amino-acid chain: Cell division protein SepF (223 aa).

The disordered stretch occupies residues tyrosine 19–glycine 81. The segment covering proline 36–proline 69 has biased composition (basic and acidic residues).

This sequence belongs to the SepF family. Homodimer. Interacts with FtsZ.

The protein localises to the cytoplasm. Functionally, cell division protein that is part of the divisome complex and is recruited early to the Z-ring. Probably stimulates Z-ring formation, perhaps through the cross-linking of FtsZ protofilaments. Its function overlaps with FtsA. This Mycobacterium ulcerans (strain Agy99) protein is Cell division protein SepF.